Consider the following 351-residue polypeptide: Phosphoribosylformylglycinamidine cyclo-ligase (351 aa).

Belongs to the AIR synthase family.

It is found in the cytoplasm. It catalyses the reaction 2-formamido-N(1)-(5-O-phospho-beta-D-ribosyl)acetamidine + ATP = 5-amino-1-(5-phospho-beta-D-ribosyl)imidazole + ADP + phosphate + H(+). Its pathway is purine metabolism; IMP biosynthesis via de novo pathway; 5-amino-1-(5-phospho-D-ribosyl)imidazole from N(2)-formyl-N(1)-(5-phospho-D-ribosyl)glycinamide: step 2/2. This Burkholderia pseudomallei (strain 668) protein is Phosphoribosylformylglycinamidine cyclo-ligase.